The sequence spans 521 residues: Spermidine transporter DUR31 (521 aa).

A helical transmembrane segment spans residues 11 to 31 (AIIYLSYAFMLATGLFLAWKF). Residue asparagine 41 is glycosylated (N-linked (GlcNAc...) asparagine). The next 12 membrane-spanning stretches (helical) occupy residues 47–67 (IPLA…TTYA), 79–99 (LVYT…GPVI), 117–137 (FGMV…FLFM), 156–176 (ALGA…FGGF), 187–207 (GVCV…YIEI), 227–247 (LVYI…GFWL), 264–284 (IAAF…FLAV), 310–330 (WLVA…FDSL), 354–374 (IMLI…ADNI), 377–397 (IYLI…LGLA), 406–426 (GFDV…FGTV), and 453–473 (FGAF…SAAL).

This sequence belongs to the sodium:solute symporter (SSF) (TC 2.A.21) family.

Its subcellular location is the membrane. It carries out the reaction spermidine(in) = spermidine(out). Spermidine transporter that is also used by salivary gland-secreted histatin 5 (Hst 5) to enter into candidal cells. A major component of host nonimmune defense systems is salivary histatins, a family of small (3-4 kDa), histidine-rich, cationic proteins secreted by major salivary glands in humans and higher primates. Hst 5 is the most potent of the 12 histatin family members and has fungicidal activity against blastoconidial and filamentous forms of Candida albicans. DUR31 only functions under high concentrations of Hst 5. Hst 5 cojugates to spermidine to be uptaken by DUR31. The protein is Spermidine transporter DUR31 of Candida albicans (strain SC5314 / ATCC MYA-2876) (Yeast).